The primary structure comprises 413 residues: RING-H2 finger protein ATL54 (413 aa).

The chain crosses the membrane as a helical span at residues 83–103; it reads ISIITITGAVLAILLTGFFLV. The RING-type; atypical zinc finger occupies 177-219; sequence CPVCLNEFEEDESLRLLPKCNHAFHISCIDTWLSSHTNCPLCR. Disordered regions lie at residues 238–258 and 321–413; these read VTPG…EDHG and THVE…VFPL. The segment covering 387-401 has biased composition (low complexity); the sequence is SSSTLKTNGSSSSVS. Residues 402–413 are compositionally biased toward polar residues; sequence CFNKNKSSVFPL.

It belongs to the RING-type zinc finger family. ATL subfamily.

It is found in the membrane. It carries out the reaction S-ubiquitinyl-[E2 ubiquitin-conjugating enzyme]-L-cysteine + [acceptor protein]-L-lysine = [E2 ubiquitin-conjugating enzyme]-L-cysteine + N(6)-ubiquitinyl-[acceptor protein]-L-lysine.. It functions in the pathway protein modification; protein ubiquitination. The protein is RING-H2 finger protein ATL54 (ATL54) of Arabidopsis thaliana (Mouse-ear cress).